The sequence spans 842 residues: ATP-binding cassette sub-family B member 6 (842 aa).

The Lumenal segment spans residues M1–C26. The interval M1–W205 is required for the lysosomal targeting. The required for ATPase activity stretch occupies residues M1 to T236. A disulfide bridge connects residues C8 and C26. A helical transmembrane segment spans residues F27 to V47. At L48–P72 the chain is on the cytoplasmic side. Residues Y73 to G93 traverse the membrane as a helical segment. The Lumenal segment spans residues R94–Y106. Residues L107–A127 form a helical membrane-spanning segment. The Cytoplasmic portion of the chain corresponds to E128–S147. A helical transmembrane segment spans residues S148–W168. The Lumenal portion of the chain corresponds to N169–Q185. The helical transmembrane segment at F186–A206 threads the bilayer. Residues P207–F263 lie on the Cytoplasmic side of the membrane. Residues I264–I284 traverse the membrane as a helical segment. An ABC transmembrane type-1 domain is found at V265–T556. The Lumenal segment spans residues F285–T305. The helical transmembrane segment at V306–V326 threads the bilayer. Topologically, residues S327–R375 are cytoplasmic. Residues G376–A396 form a helical membrane-spanning segment. D397 is a topological domain (lumenal). Residues I398–F418 form a helical membrane-spanning segment. Topologically, residues L419–Q499 are cytoplasmic. Residues T500 to V520 traverse the membrane as a helical segment. The Lumenal portion of the chain corresponds to S521 to D529. A helical transmembrane segment spans residues F530–Y550. Topologically, residues Y551–A842 are cytoplasmic. Residues I590–L824 form the ABC transporter domain. G623–S630 lines the ATP pocket.

The protein belongs to the ABC transporter superfamily. ABCB family. Heavy Metal importer (TC 3.A.1.210) subfamily. Homodimer. N-glycosylated. In terms of tissue distribution, highly expressed in the liver, adrenal glands, and testis.

It is found in the cell membrane. Its subcellular location is the mitochondrion outer membrane. The protein resides in the endoplasmic reticulum membrane. The protein localises to the golgi apparatus membrane. It localises to the endosome membrane. It is found in the lysosome membrane. Its subcellular location is the late endosome membrane. The protein resides in the early endosome membrane. The protein localises to the secreted. It localises to the extracellular exosome. It is found in the mitochondrion. Its subcellular location is the endosome. The protein resides in the multivesicular body membrane. The protein localises to the melanosome membrane. The enzyme catalyses heme b(in) + ATP + H2O = heme b(out) + ADP + phosphate + H(+). It catalyses the reaction coproporphyrin III(in) + ATP + H2O = coproporphyrin III(out) + ADP + phosphate + H(+). The catalysed reaction is pheophorbide a(in) + ATP + H2O = pheophorbide a(out) + ADP + phosphate + H(+). It carries out the reaction coproporphyrinogen III(in) + ATP + H2O = coproporphyrinogen III(out) + ADP + phosphate + H(+). The enzyme catalyses protoporphyrin IX(in) + ATP + H2O = protoporphyrin IX(out) + ADP + phosphate + H(+). It catalyses the reaction coproporphyrin I(in) + ATP + H2O = coproporphyrin I(out) + ADP + phosphate + H(+). The catalysed reaction is uroporphyrin I(in) + ATP + H2O = uroporphyrin I(out) + ADP + phosphate + H(+). It carries out the reaction uroporphyrin III(in) + ATP + H2O = uroporphyrin III(out) + ADP + phosphate + H(+). In terms of biological role, ATP-dependent transporter that catalyzes the transport of a broad-spectrum of porphyrins from the cytoplasm to the extracellular space through the plasma membrane or into the vesicle lumen. May also function as an ATP-dependent importer of porphyrins from the cytoplasm into the mitochondria, in turn may participate in the de novo heme biosynthesis regulation and in the coordination of heme and iron homeostasis during phenylhydrazine stress. May also play a key role in the early steps of melanogenesis producing PMEL amyloid fibrils. In vitro, it confers to cells a resistance to toxic metal such as arsenic and cadmium and against chemotherapeutics agent such as 5-fluorouracil, SN-38 and vincristin. In addition may play a role in the transition metal homeostasis. The chain is ATP-binding cassette sub-family B member 6 from Mesocricetus auratus (Golden hamster).